The following is a 511-amino-acid chain: 2,3-bisphosphoglycerate-independent phosphoglycerate mutase (511 aa).

Aspartate 14 and serine 64 together coordinate Mn(2+). Serine 64 acts as the Phosphoserine intermediate in catalysis. Substrate contacts are provided by residues histidine 125, 155-156, arginine 187, arginine 193, 259-262, and lysine 333; these read RD and RADR. The Mn(2+) site is built by aspartate 400, histidine 404, aspartate 441, histidine 442, and histidine 460.

It belongs to the BPG-independent phosphoglycerate mutase family. Monomer. Mn(2+) is required as a cofactor.

It catalyses the reaction (2R)-2-phosphoglycerate = (2R)-3-phosphoglycerate. Its pathway is carbohydrate degradation; glycolysis; pyruvate from D-glyceraldehyde 3-phosphate: step 3/5. Functionally, catalyzes the interconversion of 2-phosphoglycerate and 3-phosphoglycerate. This Pseudomonas putida (strain GB-1) protein is 2,3-bisphosphoglycerate-independent phosphoglycerate mutase.